Reading from the N-terminus, the 429-residue chain is MEISDILFDDLVVGEINDDFICVICSHLQVDIYQCVEGHFACKNCFLKMIELKKQCMTCRCEIKSIESLSKNRYLEKEVRKLNIYCPNSFSDLKNSIKDENACKDIITIEGLETHLKNCKFTLKECPNNKNCNDDNKNKECLKIRQGEFDHHLKECPNSLIKCEHCSIEITRSKQTDHIENHCLKVLKQCEFCFKLIERGEFNNHQDTICLSKLIKCPFNEGGCVDLVKRSDIKEHLSVLAGEHLLYSITMINSLSLKLEKSNSELQESISYSRLLKKDFKELKKSKSYSGRWVIEKWSEKLKQYGKGQSIQFQKFNTSTSPSSAFSYFTLRLFPNGQYNGETISIHLVKLFRNKSRISFSFEIENHINPSSNEEIDSRFLFGNLNDYYSTIFYKEYNKENGFISEDDTLVIHFNVEILKYYDDTFITK.

Residues 22–60 (CVICSHLQVDIYQCVEGHFACKNCFLKMIELKKQCMTCR) form an RING-type; degenerate zinc finger. TRAF-type zinc fingers lie at residues 151-203 (HHLK…GEFN) and 204-265 (NHQD…SNSE).

The protein belongs to the TNF receptor-associated factor family.

The protein resides in the cytoplasm. In terms of biological role, probable adapter protein and signal transducer that links members of the tumor necrosis factor receptor family to different signaling pathways by association with the receptor cytoplasmic domain and kinases. In Dictyostelium discoideum (Social amoeba), this protein is TNF receptor-associated factor family protein DDB_G0267744.